We begin with the raw amino-acid sequence, 276 residues long: Urease accessory protein UreD (276 aa).

It belongs to the UreD family. In terms of assembly, ureD, UreF and UreG form a complex that acts as a GTP-hydrolysis-dependent molecular chaperone, activating the urease apoprotein by helping to assemble the nickel containing metallocenter of UreC. The UreE protein probably delivers the nickel.

Its subcellular location is the cytoplasm. In terms of biological role, required for maturation of urease via the functional incorporation of the urease nickel metallocenter. The sequence is that of Urease accessory protein UreD from Variovorax paradoxus (strain S110).